A 507-amino-acid polypeptide reads, in one-letter code: Phosphoprotein (507 aa).

An interaction with N0 region spans residues 1–48; sequence MAEEQARHVKNGLECIRALKAEPIGSLAIEEAMAAWSEISDNPGQERA. Disordered stretches follow at residues 40-100, 134-163, 201-232, 250-273, and 285-309; these read SDNP…PRNL, GLDG…TEGY, NNFP…KKGT, GATQ…GNVP, and WTPE…HYDD. Ser-86 carries the phosphoserine modification. Residues 134–145 show a composition bias toward low complexity; it reads GLDGDSTLSGGD. Acidic residues predominate over residues 146 to 160; the sequence is NESENSDVDIGEPDT. Ser-151 carries the phosphoserine modification. Positions 260 to 270 are enriched in low complexity; it reads SEPSGPGAPAG. The span at 286 to 301 shows a compositional bias: polar residues; the sequence is TPESGTTISPRSQNNE. The segment at 304–376 is multimerization; the sequence is GDHYDDELFS…LSSIMIAIPG (73 aa). Asp-314 contacts Ca(2+). Interaction with the L polymerase regions lie at residues 361 to 377 and 396 to 410; these read STLE…IPGL and PIIG…AEVL. The segment at 457–507 is x domain (XD); the sequence is GPASRSVIRSIIKSSRLEEDRKRYLMTLLDDIKGANDLAKFHQMLMKIIMK. The interval 459-507 is interaction with the nucleocapsid (N-RNA); that stretch reads ASRSVIRSIIKSSRLEEDRKRYLMTLLDDIKGANDLAKFHQMLMKIIMK.

This sequence belongs to the morbillivirus P protein family. Homotetramer. Interacts (via multimerization domain and XD domain) with polymerase L; this interaction forms the polymerase L-P complex. Interacts (via N-terminus) with N0 (via Ncore); this interaction allows P to chaperon N0 to avoid N polymerization and non-specific RNA binding before encapsidation. Interacts (via C-terminus) with N-RNA template (via Ntail); this interaction maintains the P/L complex anchored to the nucleocapsid template during the sequential transcription. Interacts (via C-terminus) with protein C this interaction allows C to associate with the ribonucleocapsid. In terms of processing, phosphorylation on serines by host CK2 is necessary for the formation of viral factories.

Essential cofactor of the RNA polymerase L that plays a central role in the transcription and replication by forming the polymerase complex with RNA polymerase L and recruiting L to the genomic N-RNA template for RNA synthesis. Also plays a central role in the encapsidation of nascent RNA chains by forming the encapsidation complex with the nucleocapsid protein N (N-P complex). Acts as a chaperone for newly synthesized free N protein, so-called N0, allowing encapsidation of nascent RNA chains during replication. The nucleoprotein protein N prevents excessive phosphorylation of P, which leads to down-regulation of viral transcription/ replication. Participates, together with N, in the formation of viral factories (viroplasms), which are large inclusions in the host cytoplasm where replication takes place. In Measles virus (strain Edmonston B) (MeV), this protein is Phosphoprotein (P/V).